The following is a 489-amino-acid chain: Cytochrome P450 2C3 (489 aa).

Residue C434 participates in heme binding.

This sequence belongs to the cytochrome P450 family. It depends on heme as a cofactor.

It localises to the endoplasmic reticulum membrane. The protein localises to the microsome membrane. The enzyme catalyses an organic molecule + reduced [NADPH--hemoprotein reductase] + O2 = an alcohol + oxidized [NADPH--hemoprotein reductase] + H2O + H(+). Cytochromes P450 are a group of heme-thiolate monooxygenases. In liver microsomes, this enzyme is involved in an NADPH-dependent electron transport pathway. It oxidizes a variety of structurally unrelated compounds, including steroids, fatty acids, and xenobiotics. The sequence is that of Cytochrome P450 2C3 (CYP2C3) from Oryctolagus cuniculus (Rabbit).